Here is a 517-residue protein sequence, read N- to C-terminus: Sterol 14-alpha demethylase CYP51C (517 aa).

Residues 10-30 (TLPLSVSIPLTTSIIIILSIV) traverse the membrane as a helical segment. A lanosterol-binding site is contributed by Y115. G300 provides a ligand contact to itraconazole. Residue C458 participates in heme binding.

Belongs to the cytochrome P450 family. Heme is required as a cofactor.

The protein localises to the endoplasmic reticulum membrane. Its pathway is steroid metabolism; ergosterol biosynthesis. Functionally, together with cyp51A and cyp51B, encodes the sterol 14alpha-demethylase that plays a critical role in the third module of ergosterol biosynthesis pathway, being ergosterol the major sterol component in fungal membranes that participates in a variety of functions. Cyp51C does not seem to encode an active sterol 14-alpha-demethylase, but can impact indirectly on sterol 14alpha-demethylation, and is required for full virulence on host wheat ears, but not on Arabidopsis floral tissue or the fruits of apple and tomato. The third module or late pathway involves the ergosterol synthesis itself through consecutive reactions that mainly occur in the endoplasmic reticulum (ER) membrane. In filamentous fungi, during the initial step of this module, lanosterol (lanosta-8,24-dien-3beta-ol) can be metabolized to eburicol. Sterol 14alpha-demethylase catalyzes the three-step oxidative removal of the 14alpha-methyl group (C-32) of both these sterols in the form of formate, and converts eburicol and lanosterol to 14-demethyleburicol (4,4,24-trimethylergosta-8,14,24(28)-trienol) and 4,4-dimethyl-5alpha-cholesta-8,14,24-trien-3beta-ol, respectively, which are further metabolized by other enzymes in the pathway to ergosterol. The chain is Sterol 14-alpha demethylase CYP51C from Gibberella zeae (strain ATCC MYA-4620 / CBS 123657 / FGSC 9075 / NRRL 31084 / PH-1) (Wheat head blight fungus).